A 1343-amino-acid polypeptide reads, in one-letter code: MVYSYSEKKRIRKDFGKRPKVLDIPYLLSIQLDSFKKFTDQDPTGERGLEAAFRSVFPIKSFSGNSELQYVSYKLGEPVFDVKECQIRGVTYSAPLRVKLRMVLYDREAAAGTVKDIKEQEVYMGDIPLMTDNGTFVINGTERVIVSQLHRSPGVFFDHDRGKTHSSGKVLYNARIIPYRGSWLDFEFDPKDALFVRIDRRRKLPATIMLRALEYSTQEILDLFFERVEFKIKKDTLVMALVPERLRGETASYDIKDAEGSVLVEAGRRITARHIRQLEKTNTTELEVPVEYIVGKYAAQDYIDPDTGEVLVSANSEISLEDLAKLSLAGIKELSTLYINELDHGAYISDTLRIDSTTNRLEALVEIYRMMRPGEPPTKDAAEALFQNLFFSEERYDLSKVGRMKFNRRLSIPDDEGSGVLSKEDIVAVMKNIIHIRNGFDEVDDIDHLGNRRIRSVGEMAENQFRVGLVRVERAVRERLSLGDLNELMPQDLINAKPISAAVKEFFGSSQLSQFMDQNNPLSEVTHKRRISALGPGGLTRERAGFEVRDVHPTHYGRLCPIETPEGPNIGLINSLASFARTNSYGFLETPYRKVIDGVITDEVEYLSAIEEGRYVIAQANIEIDANGRMAEEQIACRHKGESTFMRAADIQYMDVSPQQIISVAASLIPFLEHDDANRALMGANMQRQAVPTLRSEKPLVGTGIERTLAVDSGVVVVAKRGGFVDYVDASRIVVKVNEDELRPGEAGIDIYNLTKYTRSNQNTCINQRPCCSVGEPVVRGDVLADGPSTDLGDLALGQNMRIAFMPWNGYNFEDSILISERVAQEDRFTTIHIQELSCIARDTKLGSEEITADIPNVGESALSKLDESGIVYIGAEVKGGDILVGKVTPKGETQLTPEEKLLRAIFGEKASDVKDSSLRVPNSVKGTIIDVQVFTRDGVEKDKRAVEIEEMHIAQARKDLGEEFKILEEGVLSRARNLLIGAGFTDAQIAALPRKDVLIQVIDDETKQTELEQLAEQHEELKADFDKKFEIKRRKITQGDDLAPGVLKIVKVYLAVKRTIQPGDKMAGRHGNKGVISKICPIEDMPYDEQGNPVDIVLNPLGVPSRMNIGQVLEVHMGAAAKGIGNKITAMLEEQRELAEVRGYIKQVYELGDEVQQRVDIDSFTDDEVLRLATNLKGGIPIATPAFDGAKEKEIKQMLELAGLPTSGQLKLFDGRTGNEFERQVTVGYMYMLKLNHLVDDKMHARSTGSYSLVTQQPLGGKAQFGGQRFGEMEVWALEAYGAAYTLQEMLTVKSDDVNGRTQMYKNIVDGNHQMQPGMPESFNVLLKEIRSLGINIELDQA.

It belongs to the RNA polymerase beta chain family. The RNAP catalytic core consists of 2 alpha, 1 beta, 1 beta' and 1 omega subunit. When a sigma factor is associated with the core the holoenzyme is formed, which can initiate transcription.

It catalyses the reaction RNA(n) + a ribonucleoside 5'-triphosphate = RNA(n+1) + diphosphate. Functionally, DNA-dependent RNA polymerase catalyzes the transcription of DNA into RNA using the four ribonucleoside triphosphates as substrates. The protein is DNA-directed RNA polymerase subunit beta of Shewanella baltica (strain OS155 / ATCC BAA-1091).